The sequence spans 217 residues: Phosphoenolpyruvate guanylyltransferase (217 aa).

T150, G165, and S168 together coordinate phosphoenolpyruvate.

This sequence belongs to the CofC family.

The catalysed reaction is phosphoenolpyruvate + GTP + H(+) = enolpyruvoyl-2-diphospho-5'-guanosine + diphosphate. The protein operates within cofactor biosynthesis; coenzyme F420 biosynthesis. Its function is as follows. Guanylyltransferase that catalyzes the activation of phosphoenolpyruvate (PEP) as enolpyruvoyl-2-diphospho-5'-guanosine, via the condensation of PEP with GTP. It is involved in the biosynthesis of coenzyme F420, a hydride carrier cofactor. In Mycobacterium ulcerans (strain Agy99), this protein is Phosphoenolpyruvate guanylyltransferase.